The primary structure comprises 997 residues: Glutamate [NMDA] receptor subunit 1 (997 aa).

The N-terminal stretch at 1–26 (MAVAEFVFCWPLFELAIVLLVAPIHA) is a signal peptide. At 27–573 (AQRHTASDNP…TLVSFLQPFS (547 aa)) the chain is on the extracellular side. 7 N-linked (GlcNAc...) asparagine glycosylation sites follow: asparagine 258, asparagine 314, asparagine 345, asparagine 397, asparagine 454, asparagine 481, and asparagine 501. Residues 530–532 (PLT) and arginine 537 contribute to the glycine site. The chain crosses the membrane as a helical span at residues 574-594 (NTLWILVMVSVHVVALVLYLL). The Cytoplasmic segment spans residues 595-651 (DRFSPFGRFKLSHSDSNEEKALNLSSAVWFAWGVLLNSGIGEGTPRSFSARVLGMVW). Residues 652–672 (AGFAMIIVASYTANLAAFLVL) form a helical membrane-spanning segment. Over 673–831 (ERPKTKLSGI…KTPNTLGLKN (159 aa)) the chain is Extracellular. An N-linked (GlcNAc...) asparagine glycan is attached at asparagine 693. Glycine contacts are provided by serine 703 and aspartate 747. A helical transmembrane segment spans residues 832 to 852 (MAGVFILVGVGIAGGVGLIII). Residues 853-997 (EVIYKKHQVK…YTSDVSHLVV (145 aa)) are Cytoplasmic-facing. The tract at residues 947–997 (ELGKPGQSPKVMSANQPGMPMPMLGKTRPQQSVLPPRYSPGYTSDVSHLVV) is disordered. The segment covering 987–997 (GYTSDVSHLVV) has biased composition (polar residues).

The protein belongs to the glutamate-gated ion channel (TC 1.A.10.1) family. In terms of assembly, forms a heteromeric NMDA channel with Nmdar2.

The protein localises to the cell membrane. The protein resides in the postsynaptic cell membrane. It is found in the postsynaptic density. In terms of biological role, NMDA receptor subtype of glutamate-gated ion channels with high calcium permeability and voltage-dependent sensitivity to magnesium. Mediated by glycine. This protein plays a key role in synaptic plasticity, synaptogenesis, excitotoxicity, memory acquisition and learning. It mediates neuronal functions in glutamate neurotransmission. Is involved in the cell surface targeting of NMDA receptors. Plays a role in associative learning and in long-term memory consolidation. This is Glutamate [NMDA] receptor subunit 1 from Drosophila erecta (Fruit fly).